A 77-amino-acid polypeptide reads, in one-letter code: Delta/omega-plectoxin-Pt1a (77 aa).

The signal sequence occupies residues 1–20 (MKHLIVAVVLLSALAICTSA). Residues 21-34 (EEEQVNVPFRPEER) constitute a propeptide that is removed on maturation. Intrachain disulfides connect Cys-38–Cys-51, Cys-45–Cys-57, Cys-50–Cys-67, Cys-54–Cys-74, and Cys-59–Cys-65. Ser-73 carries O-palmitoyl serine lipidation. The residue at position 74 (Cys-74) is a Cysteine amide.

This sequence belongs to the neurotoxin 02 (plectoxin) family. 01 (Tx3) subfamily. Expressed by the venom gland.

It localises to the secreted. Its function is as follows. Excitatory toxin that acts on both calcium and sodium (Nav) channels. It preferentially blocks a subset of calcium channels that is apparently not required for neurotransmitter release, it decreases threshold for sodium channel activation and it slows sodium channel inactivation. As it enhances synaptic transmission by prolonging presynaptic release of neurotransmitter, its effects on sodium and calcium channels may act synergistically to sustain the terminal excitability. This is Delta/omega-plectoxin-Pt1a from Plectreurys tristis (Spider).